A 59-amino-acid polypeptide reads, in one-letter code: MSDIEAQRIAARIDTVLDILVAGDYHSAINNLEILRAELLDQVKDGISPSQAPGSPWEI.

Belongs to the UPF0509 family.

The protein is UPF0509 protein YciZ of Salmonella agona (strain SL483).